A 235-amino-acid polypeptide reads, in one-letter code: Ribitol-5-phosphate cytidylyltransferase (235 aa).

Residues 7–10 (LAGG), 82–88 (GADRNTS), and Ser113 each bind CTP.

It belongs to the IspD/TarI cytidylyltransferase family. TarI subfamily.

The catalysed reaction is D-ribitol 5-phosphate + CTP + H(+) = CDP-L-ribitol + diphosphate. Its pathway is cell wall biogenesis; poly(ribitol phosphate) teichoic acid biosynthesis. Catalyzes the transfer of the cytidylyl group of CTP to D-ribitol 5-phosphate. In Streptococcus pneumoniae (strain Hungary19A-6), this protein is Ribitol-5-phosphate cytidylyltransferase.